A 228-amino-acid polypeptide reads, in one-letter code: Ion-translocating oxidoreductase complex subunit E (228 aa).

A run of 5 helical transmembrane segments spans residues 24–44 (LLGLCPLLAISGTVVNALGLG), 73–93 (VFVLIIASVVTAIELAMNAFF), 95–115 (ELYLILGIFIPLIVTNCAIIG), 130–150 (LADGLAMGLGFTCVLVALGAL), and 184–204 (GFLLALLPPGAFIALGLLIAL).

The protein belongs to the NqrDE/RnfAE family. The complex is composed of six subunits: RnfA, RnfB, RnfC, RnfD, RnfE and RnfG.

It is found in the cell inner membrane. Functionally, part of a membrane-bound complex that couples electron transfer with translocation of ions across the membrane. The chain is Ion-translocating oxidoreductase complex subunit E from Thioalkalivibrio sulfidiphilus (strain HL-EbGR7).